Here is a 329-residue protein sequence, read N- to C-terminus: Tyrosine--tRNA ligase (329 aa).

The L-tyrosine site is built by Tyr31, Tyr157, Gln161, Asp164, and Gln179. A 'KMSKS' region motif is present at residues Lys220–Ser224. Lys223 is a binding site for ATP.

Belongs to the class-I aminoacyl-tRNA synthetase family. TyrS type 4 subfamily. In terms of assembly, homodimer.

The protein resides in the cytoplasm. The enzyme catalyses tRNA(Tyr) + L-tyrosine + ATP = L-tyrosyl-tRNA(Tyr) + AMP + diphosphate + H(+). Its function is as follows. Catalyzes the attachment of tyrosine to tRNA(Tyr) in a two-step reaction: tyrosine is first activated by ATP to form Tyr-AMP and then transferred to the acceptor end of tRNA(Tyr). The chain is Tyrosine--tRNA ligase from Picrophilus torridus (strain ATCC 700027 / DSM 9790 / JCM 10055 / NBRC 100828 / KAW 2/3).